Reading from the N-terminus, the 376-residue chain is uncharacterized protein (376 aa).

Over 1–280 the chain is Lumenal; it reads MPIPIIAHIA…RTPGFRRVVS (280 aa). NADP(+) is bound by residues I66, D115, R178, K233, V270, and T272. Catalysis depends on K233, which acts as the Lowers pKa of active site Tyr. The helical transmembrane segment at 281 to 301 threads the bilayer; that stretch reads FGKVWGLFLYLLLWPFWWLLL. Over 302 to 376 the chain is Cytoplasmic; sequence KGTIHGAQSF…KKKKIKKSKK (75 aa).

The protein belongs to the short-chain dehydrogenases/reductases (SDR) family.

It is found in the cytoplasm. Its subcellular location is the endoplasmic reticulum membrane. In terms of biological role, may be involved in lipid metabolism. This is an uncharacterized protein from Schizosaccharomyces pombe (strain 972 / ATCC 24843) (Fission yeast).